A 140-amino-acid chain; its full sequence is MIRQEKDIKDEIMYGEREIEAGSLICFPNPNINRDYEISIDFPEFTCKCPFSGYPDFATLKIKYQPNTKVIELKAIKLYLNSFREKKISHEEVTNKIIDDFVEVSDPKWMQLEADFNPRGNVHTIIRVCHGKRNNLELSL.

The active-site Thioimide intermediate is cysteine 49. Catalysis depends on aspartate 56, which acts as the Proton donor. Substrate is bound by residues 71 to 73 (IEL) and 90 to 91 (HE).

It belongs to the GTP cyclohydrolase I family. QueF type 1 subfamily.

Its subcellular location is the cytoplasm. The catalysed reaction is 7-aminomethyl-7-carbaguanine + 2 NADP(+) = 7-cyano-7-deazaguanine + 2 NADPH + 3 H(+). It functions in the pathway tRNA modification; tRNA-queuosine biosynthesis. Its function is as follows. Catalyzes the NADPH-dependent reduction of 7-cyano-7-deazaguanine (preQ0) to 7-aminomethyl-7-deazaguanine (preQ1). The chain is NADPH-dependent 7-cyano-7-deazaguanine reductase from Prochlorococcus marinus (strain NATL2A).